Here is a 440-residue protein sequence, read N- to C-terminus: Ribosomal protein uS12 methylthiotransferase RimO (440 aa).

Residues 7-117 form the MTTase N-terminal domain; that stretch reads PKISFVSLGC…VLDAVHRALP (111 aa). Positions 16, 52, 81, 148, 152, and 155 each coordinate [4Fe-4S] cluster. Residues 134 to 370 form the Radical SAM core domain; that stretch reads LTPRHYAYLK…MARQQKISAQ (237 aa). Residues 373 to 439 form the TRAM domain; the sequence is KRKVGTRQQV…EYDLHGSVAG (67 aa).

This sequence belongs to the methylthiotransferase family. RimO subfamily. [4Fe-4S] cluster serves as cofactor.

Its subcellular location is the cytoplasm. It carries out the reaction L-aspartate(89)-[ribosomal protein uS12]-hydrogen + (sulfur carrier)-SH + AH2 + 2 S-adenosyl-L-methionine = 3-methylsulfanyl-L-aspartate(89)-[ribosomal protein uS12]-hydrogen + (sulfur carrier)-H + 5'-deoxyadenosine + L-methionine + A + S-adenosyl-L-homocysteine + 2 H(+). Functionally, catalyzes the methylthiolation of an aspartic acid residue of ribosomal protein uS12. The sequence is that of Ribosomal protein uS12 methylthiotransferase RimO from Afipia carboxidovorans (strain ATCC 49405 / DSM 1227 / KCTC 32145 / OM5) (Oligotropha carboxidovorans).